Consider the following 279-residue polypeptide: 3-methyl-2-oxobutanoate hydroxymethyltransferase (279 aa).

Asp-44 and Asp-83 together coordinate Mg(2+). 3-methyl-2-oxobutanoate-binding positions include 44-45 (DS), Asp-83, and Lys-112. Glu-114 serves as a coordination point for Mg(2+). The active-site Proton acceptor is Glu-180.

Belongs to the PanB family. As to quaternary structure, homodecamer; pentamer of dimers. Mg(2+) is required as a cofactor.

The protein resides in the cytoplasm. The enzyme catalyses 3-methyl-2-oxobutanoate + (6R)-5,10-methylene-5,6,7,8-tetrahydrofolate + H2O = 2-dehydropantoate + (6S)-5,6,7,8-tetrahydrofolate. It functions in the pathway cofactor biosynthesis; (R)-pantothenate biosynthesis; (R)-pantoate from 3-methyl-2-oxobutanoate: step 1/2. Catalyzes the reversible reaction in which hydroxymethyl group from 5,10-methylenetetrahydrofolate is transferred onto alpha-ketoisovalerate to form ketopantoate. The protein is 3-methyl-2-oxobutanoate hydroxymethyltransferase of Chloroflexus aggregans (strain MD-66 / DSM 9485).